A 133-amino-acid chain; its full sequence is Small ribosomal subunit protein uS8 (133 aa).

Belongs to the universal ribosomal protein uS8 family. As to quaternary structure, part of the 30S ribosomal subunit. Contacts proteins S5 and S12.

Functionally, one of the primary rRNA binding proteins, it binds directly to 16S rRNA central domain where it helps coordinate assembly of the platform of the 30S subunit. The polypeptide is Small ribosomal subunit protein uS8 (Synechococcus sp. (strain WH7803)).